A 459-amino-acid polypeptide reads, in one-letter code: MPSNVRSGVLTLLHTACGAGVLAMPFAFKPFGLMPGLITLTFCGICSLCGLLLQTRIAKYVPKSENASFAKLTQLINPSISVVFDFAIAVKCFGVGVSYLIIVGDLVPQIVQSIFYRNDDNMSGSQEHHMFLDRRLYITLIIVFVISPLCFKRSLNSLRYASMIAIVSVAYLSGLIIYHFVNRHQLERGQVYFMVPHGDSQSHSPLTTLPIFVFAYTCHHNMFSVINEQVDKSFKVIRRIPIFAIVLAYFLYIIIGGTGYMTFGENIVGNILTLYPNSISTTIGRLAMLLLVMLAFPLQCHPCRSSVKNIIIFIENFRKGKLYDNRASFIPLDNFNSEDPQEAPTQQNNEEPNLRSESLRHINIITLCILLFSYLLAISITSLAKVLAIVGATGSTSISFILPGLFGYKLIGSEFTGTNERVPTSIKIFKYLSLSLFIWGIAVMVASLSAIVFLGTSSH.

8 consecutive transmembrane segments (helical) span residues Gly-8–Phe-28, Leu-33–Leu-53, Val-82–Ile-102, Phe-131–Phe-151, Ala-161–Val-181, Leu-206–Ile-226, Ile-240–Tyr-260, and Ser-278–Leu-298. Over residues Phe-335–Glu-351 the composition is skewed to polar residues. The interval Phe-335 to Leu-354 is disordered. A run of 3 helical transmembrane segments spans residues Ile-364–Ala-384, Val-386–Phe-406, and Leu-434–Leu-454.

The protein belongs to the amino acid/polyamine transporter 2 family.

Its subcellular location is the vacuole membrane. In terms of biological role, probable amino acid transporter of unknown specificity. This is Vacuolar amino acid transporter 5 (AVT5) from Saccharomyces cerevisiae (strain ATCC 204508 / S288c) (Baker's yeast).